The following is a 514-amino-acid chain: Periplasmic [NiFeSe] hydrogenase large subunit (514 aa).

Glu-52 contributes to the Fe cation binding site. Positions 71 and 74 each coordinate Ni(2+). 2 residues coordinate Fe cation: Cys-74 and Ile-445. Ni(2+)-binding residues include Sec-493 and Cys-496. Sec-493 is a non-standard amino acid (selenocysteine). Residues Cys-496 and His-499 each contribute to the Fe cation site.

Belongs to the [NiFe]/[NiFeSe] hydrogenase large subunit family. As to quaternary structure, heterodimer of a large and a small subunit. The cofactor is Fe cation. Ni(2+) serves as cofactor.

The protein localises to the periplasm. The catalysed reaction is H2 + A = AH2. The polypeptide is Periplasmic [NiFeSe] hydrogenase large subunit (Desulfomicrobium baculatum (Desulfovibrio baculatus)).